The chain runs to 1525 residues: Receptor-type guanylate cyclase Gyc76C (1525 aa).

The N-terminal stretch at 1–19 is a signal peptide; the sequence is MTRWPFNLLLLLSVAVRDC. The Extracellular segment spans residues 20-493; the sequence is SNHRTVLTVG…KKDDTHYTST (474 aa). N-linked (GlcNAc...) asparagine glycosylation is found at asparagine 74, asparagine 184, asparagine 222, asparagine 338, asparagine 383, asparagine 394, asparagine 416, asparagine 428, and asparagine 458. The chain crosses the membrane as a helical span at residues 494-514; the sequence is VAAVVLGVLLFCSGVITMSIY. The Cytoplasmic segment spans residues 515–1525; the sequence is RKWKIELEIE…AAARDRESIV (1011 aa). The Protein kinase domain maps to 547-824; that stretch reads PSKVSLMSAQ…SVIRNRLKKM (278 aa). ATP contacts are provided by residues 553-561 and lysine 581; that span reads MSAQSYGSR. A Guanylate cyclase domain is found at 896-1026; that stretch reads TIYFSDIVGF…DTVNTASRME (131 aa). Aspartate 901, isoleucine 902, and aspartate 945 together coordinate Mg(2+). Disordered stretches follow at residues 1122–1168, 1192–1217, and 1256–1308; these read GSRR…NGLG, ETNE…LVRQ, and ESRS…VHSS. Basic and acidic residues predominate over residues 1147–1162; it reads ESPRMVSKRDRDRERP. Residues 1202-1212 are compositionally biased toward gly residues; that stretch reads GGSGGVSGSGS. Over residues 1282–1308 the composition is skewed to polar residues; it reads LSKNNSRSLDTGVSLISGNPNGEVHSS.

It belongs to the adenylyl cyclase class-4/guanylyl cyclase family. In terms of assembly, interacts with the semaphorin 1A receptor PlexA; PlexA enhances Gyc76C catalytic activity. Interacts with the PDZ domain-containing protein kermit; kermit increases cell surface expression of Gyc76C. As to expression, in the adult, widely distributed in the head and thorax with highest levels in the optic lobe and central brain and expression also detected in the retina. Expressed at similar levels in adult head and body. In females, highly expressed in oocytes with lower levels in the digestive tract. In mid-embryogenesis, enriched in the circular visceral mesoderm that overlies the migrating salivary gland and in the fat body that underlies the gland but at background levels in the gland itself. In late embryogenesis, detected in the mature salivary gland, in the somatic body wall muscles and the tendon cells to which the muscles attach, and in the constricting midgut. Also expressed in migrating tracheal cells at mid-embryogenesis and in the developed trachea at the end of embryogenesis with enrichment in the apical domains.

The protein resides in the cell membrane. It catalyses the reaction GTP = 3',5'-cyclic GMP + diphosphate. In terms of biological role, guanylate cyclase involved in the production of the second messenger cGMP. Acts as a receptor for the NPLP1-4 peptide and modulates the innate immune IMD pathway in response to salt stress by inducing nuclear translocation of NF-kappa-B protein Rel which leads to increased expression of the antimicrobial peptide diptericin. Plays a role in Sema-1a-mediated axon repulsion which is required for the correct establishment of neuromuscular connectivity. Required in developing embryonic somatic muscle for correct patterning of ventral and lateral muscles and for localization of integrin beta-ps at developing dorsal muscle myotendinous junctions. Required for invagination, migration and lumen shape of the embryonic salivary gland by regulating the localization of the integrin-binding protein rhea/Talin to the visceral mesoderm surrounding the gland and maintaining the laminin matrix. Required in the developing wing to regulate extracellular matrix (ECM) organization by activating the cGMP-dependent protein kinase For which represses the activity of matrix metalloproteases such as Mmp2 and decreases ECM matrix reorganization. This chain is Receptor-type guanylate cyclase Gyc76C, found in Drosophila melanogaster (Fruit fly).